Here is a 361-residue protein sequence, read N- to C-terminus: Mycothiol acetyltransferase (361 aa).

N-acetyltransferase domains lie at P25 to S173 and V195 to F361. E59 is a 1D-myo-inositol 2-(L-cysteinylamino)-2-deoxy-alpha-D-glucopyranoside binding site. L98–V100 contributes to the acetyl-CoA binding site. The 1D-myo-inositol 2-(L-cysteinylamino)-2-deoxy-alpha-D-glucopyranoside site is built by E229, K280, and E295. Acetyl-CoA-binding positions include I299 to L301 and Q306 to R312. 1D-myo-inositol 2-(L-cysteinylamino)-2-deoxy-alpha-D-glucopyranoside is bound at residue Y333. N338–H343 contributes to the acetyl-CoA binding site.

This sequence belongs to the acetyltransferase family. MshD subfamily. As to quaternary structure, monomer.

The enzyme catalyses 1D-myo-inositol 2-(L-cysteinylamino)-2-deoxy-alpha-D-glucopyranoside + acetyl-CoA = mycothiol + CoA + H(+). Catalyzes the transfer of acetyl from acetyl-CoA to desacetylmycothiol (Cys-GlcN-Ins) to form mycothiol. The sequence is that of Mycothiol acetyltransferase from Corynebacterium kroppenstedtii (strain DSM 44385 / JCM 11950 / CIP 105744 / CCUG 35717).